We begin with the raw amino-acid sequence, 546 residues long: CTP synthase (546 aa).

The tract at residues 1-267 (MTKFIFVTGG…AEQVLDILQL (267 aa)) is amidoligase domain. Position 13 (Ser13) interacts with CTP. Residue Ser13 participates in UTP binding. Residue 14-19 (SIGKGI) coordinates ATP. Tyr54 lines the L-glutamine pocket. An ATP-binding site is contributed by Asp71. Residues Asp71 and Glu141 each contribute to the Mg(2+) site. CTP-binding positions include 148 to 150 (DIE), 188 to 193 (KTKPTQ), and Lys224. UTP contacts are provided by residues 188-193 (KTKPTQ) and Lys224. A Glutamine amidotransferase type-1 domain is found at 292–534 (EVAIVGKYVR…IKAALGSDLT (243 aa)). Gly354 is an L-glutamine binding site. The active-site Nucleophile; for glutamine hydrolysis is Cys381. L-glutamine contacts are provided by residues 382–385 (LGMQ), Glu405, and Arg462. Catalysis depends on residues His507 and Glu509.

The protein belongs to the CTP synthase family. In terms of assembly, homotetramer.

The enzyme catalyses UTP + L-glutamine + ATP + H2O = CTP + L-glutamate + ADP + phosphate + 2 H(+). It carries out the reaction L-glutamine + H2O = L-glutamate + NH4(+). The catalysed reaction is UTP + NH4(+) + ATP = CTP + ADP + phosphate + 2 H(+). The protein operates within pyrimidine metabolism; CTP biosynthesis via de novo pathway; CTP from UDP: step 2/2. With respect to regulation, allosterically activated by GTP, when glutamine is the substrate; GTP has no effect on the reaction when ammonia is the substrate. The allosteric effector GTP functions by stabilizing the protein conformation that binds the tetrahedral intermediate(s) formed during glutamine hydrolysis. Inhibited by the product CTP, via allosteric rather than competitive inhibition. Catalyzes the ATP-dependent amination of UTP to CTP with either L-glutamine or ammonia as the source of nitrogen. Regulates intracellular CTP levels through interactions with the four ribonucleotide triphosphates. The polypeptide is CTP synthase (Synechococcus sp. (strain ATCC 27144 / PCC 6301 / SAUG 1402/1) (Anacystis nidulans)).